Here is a 334-residue protein sequence, read N- to C-terminus: Protein-methionine-sulfoxide reductase catalytic subunit MsrP (334 aa).

Residues Met-1–Ala-44 constitute a signal peptide (tat-type signal). Mo-molybdopterin-binding positions include Asn-88, Tyr-91–Glu-92, Cys-146, Thr-181, Asn-233, Arg-238, and Gly-249–Lys-251.

It belongs to the MsrP family. Heterodimer of a catalytic subunit (MsrP) and a heme-binding subunit (MsrQ). The cofactor is Mo-molybdopterin. Post-translationally, predicted to be exported by the Tat system. The position of the signal peptide cleavage has not been experimentally proven.

Its subcellular location is the periplasm. It carries out the reaction L-methionyl-[protein] + a quinone + H2O = L-methionyl-(S)-S-oxide-[protein] + a quinol. The enzyme catalyses L-methionyl-[protein] + a quinone + H2O = L-methionyl-(R)-S-oxide-[protein] + a quinol. In terms of biological role, part of the MsrPQ system that repairs oxidized periplasmic proteins containing methionine sulfoxide residues (Met-O), using respiratory chain electrons. Thus protects these proteins from oxidative-stress damage caused by reactive species of oxygen and chlorine generated by the host defense mechanisms. MsrPQ is essential for the maintenance of envelope integrity under bleach stress, rescuing a wide series of structurally unrelated periplasmic proteins from methionine oxidation, including the primary periplasmic chaperone SurA and the lipoprotein Pal. The catalytic subunit MsrP is non-stereospecific, being able to reduce both (R-) and (S-) diastereoisomers of methionine sulfoxide. The protein is Protein-methionine-sulfoxide reductase catalytic subunit MsrP of Salmonella arizonae (strain ATCC BAA-731 / CDC346-86 / RSK2980).